The sequence spans 274 residues: Dermonecrotic toxin SdSicTox-betaIIB1bx (274 aa).

The active site involves H5. Residues E25 and D27 each coordinate Mg(2+). H41 (nucleophile) is an active-site residue. Disulfide bonds link C45–C51 and C47–C190. A Mg(2+)-binding site is contributed by D85.

It belongs to the arthropod phospholipase D family. Class II subfamily. The cofactor is Mg(2+). Expressed by the venom gland.

The protein localises to the secreted. It carries out the reaction an N-(acyl)-sphingosylphosphocholine = an N-(acyl)-sphingosyl-1,3-cyclic phosphate + choline. The enzyme catalyses an N-(acyl)-sphingosylphosphoethanolamine = an N-(acyl)-sphingosyl-1,3-cyclic phosphate + ethanolamine. It catalyses the reaction a 1-acyl-sn-glycero-3-phosphocholine = a 1-acyl-sn-glycero-2,3-cyclic phosphate + choline. The catalysed reaction is a 1-acyl-sn-glycero-3-phosphoethanolamine = a 1-acyl-sn-glycero-2,3-cyclic phosphate + ethanolamine. In terms of biological role, dermonecrotic toxins cleave the phosphodiester linkage between the phosphate and headgroup of certain phospholipids (sphingolipid and lysolipid substrates), forming an alcohol (often choline) and a cyclic phosphate. This toxin acts on sphingomyelin (SM). It may also act on ceramide phosphoethanolamine (CPE), lysophosphatidylcholine (LPC) and lysophosphatidylethanolamine (LPE), but not on lysophosphatidylserine (LPS), and lysophosphatidylglycerol (LPG). It acts by transphosphatidylation, releasing exclusively cyclic phosphate products as second products. Induces dermonecrosis, hemolysis, increased vascular permeability, edema, inflammatory response, and platelet aggregation. The protein is Dermonecrotic toxin SdSicTox-betaIIB1bx of Sicarius cf. damarensis (strain GJB-2008) (Six-eyed sand spider).